Here is a 420-residue protein sequence, read N- to C-terminus: Gamma-glutamyl phosphate reductase (420 aa).

Belongs to the gamma-glutamyl phosphate reductase family.

The protein resides in the cytoplasm. The enzyme catalyses L-glutamate 5-semialdehyde + phosphate + NADP(+) = L-glutamyl 5-phosphate + NADPH + H(+). It functions in the pathway amino-acid biosynthesis; L-proline biosynthesis; L-glutamate 5-semialdehyde from L-glutamate: step 2/2. Its function is as follows. Catalyzes the NADPH-dependent reduction of L-glutamate 5-phosphate into L-glutamate 5-semialdehyde and phosphate. The product spontaneously undergoes cyclization to form 1-pyrroline-5-carboxylate. The chain is Gamma-glutamyl phosphate reductase from Pasteurella multocida (strain Pm70).